Here is a 71-residue protein sequence, read N- to C-terminus: Hainantoxin-X-2 (71 aa).

Positions 1 to 26 are cleaved as a signal peptide; it reads MKTAIFTVVLALAVFAVLCLVVSTHA. The propeptide occupies 27-43; the sequence is ERHSKTDMEDSPMIQER. 2 disulfide bridges follow: cysteine 52-cysteine 65 and cysteine 61-cysteine 70.

Belongs to the neurotoxin 36 family. 02 subfamily. In terms of tissue distribution, expressed by the venom gland.

Its subcellular location is the secreted. Reversibly blocks N-type calcium channels (Cav2.2/CACNA1B) in rat dorsal root ganglion cells. Elicits no toxic symptoms in either vertebrates or invertebrates during a period of 48 hours post-injection, when it was assayed in vivo by direct injection into mice and cockroaches. The protein is Hainantoxin-X-2 of Cyriopagopus hainanus (Chinese bird spider).